Here is a 343-residue protein sequence, read N- to C-terminus: D-erythrose-4-phosphate dehydrogenase (343 aa).

An NAD(+)-binding site is contributed by 12–13 (RI). Substrate contacts are provided by residues 154–156 (SCT), Arg-200, 213–214 (TK), and Arg-236. The active-site Nucleophile is Cys-155. Asn-318 contributes to the NAD(+) binding site.

Belongs to the glyceraldehyde-3-phosphate dehydrogenase family. Epd subfamily. As to quaternary structure, homotetramer.

It is found in the cytoplasm. The catalysed reaction is D-erythrose 4-phosphate + NAD(+) + H2O = 4-phospho-D-erythronate + NADH + 2 H(+). It functions in the pathway cofactor biosynthesis; pyridoxine 5'-phosphate biosynthesis; pyridoxine 5'-phosphate from D-erythrose 4-phosphate: step 1/5. In terms of biological role, catalyzes the NAD-dependent conversion of D-erythrose 4-phosphate to 4-phosphoerythronate. This is D-erythrose-4-phosphate dehydrogenase from Pseudoalteromonas translucida (strain TAC 125).